Consider the following 139-residue polypeptide: Small ribosomal subunit protein bS6 (139 aa).

Over residues 95–121 (AVTEQSEMLKAEESRNERRERRERPND) the composition is skewed to basic and acidic residues. The segment at 95 to 139 (AVTEQSEMLKAEESRNERRERRERPNDNAEGADGDDNSDSDNADE) is disordered. Over residues 124 to 139 (EGADGDDNSDSDNADE) the composition is skewed to acidic residues.

This sequence belongs to the bacterial ribosomal protein bS6 family.

Binds together with bS18 to 16S ribosomal RNA. In Pseudomonas aeruginosa (strain LESB58), this protein is Small ribosomal subunit protein bS6.